The chain runs to 563 residues: Tripeptidyl-peptidase 1 (563 aa).

The signal sequence occupies residues 1–19 (MGLQACLLGLFALILSGKC). A propeptide spans 20–195 (SYSPEPDQRR…PEPQVTGTVG (176 aa)) (removed in mature form). Residues Cys-111 and Cys-122 are joined by a disulfide bond. Residues 199–563 (GVTPSVIRKR…PALLKTLLNP (365 aa)) enclose the Peptidase S53 domain. Asn-210 and Asn-222 each carry an N-linked (GlcNAc...) asparagine glycan. Active-site charge relay system residues include Glu-272 and Asp-276. Residues Asn-286, Asn-313, and Asn-443 are each glycosylated (N-linked (GlcNAc...) asparagine). 2 disulfide bridges follow: Cys-365/Cys-526 and Cys-522/Cys-537. Ser-475 acts as the Charge relay system in catalysis. Residues Asp-517 and Val-518 each coordinate Ca(2+). Ca(2+) is bound by residues Gly-539, Gly-541, and Asp-543.

As to quaternary structure, monomer. Interacts with CLN5. Interacts with CLN3. The cofactor is Ca(2+). Activated by autocatalytic proteolytical processing upon acidification. N-glycosylation is required for processing and activity.

It is found in the lysosome. The protein resides in the melanosome. It carries out the reaction Release of an N-terminal tripeptide from a polypeptide, but also has endopeptidase activity.. Its function is as follows. Lysosomal serine protease with tripeptidyl-peptidase I activity. May act as a non-specific lysosomal peptidase which generates tripeptides from the breakdown products produced by lysosomal proteinases. Requires substrates with an unsubstituted N-terminus. This is Tripeptidyl-peptidase 1 (TPP1) from Macaca fascicularis (Crab-eating macaque).